We begin with the raw amino-acid sequence, 229 residues long: Large ribosomal subunit protein uL1 (229 aa).

This sequence belongs to the universal ribosomal protein uL1 family. As to quaternary structure, part of the 50S ribosomal subunit.

Binds directly to 23S rRNA. The L1 stalk is quite mobile in the ribosome, and is involved in E site tRNA release. In terms of biological role, protein L1 is also a translational repressor protein, it controls the translation of the L11 operon by binding to its mRNA. The chain is Large ribosomal subunit protein uL1 from Actinobacillus pleuropneumoniae serotype 3 (strain JL03).